Reading from the N-terminus, the 454-residue chain is MQLKIKEIFDQDYTKLEGQKVQIKAWVRSNRDSKKIGFLVLNDGSSLTNLQAVYRVDKISNYEEITAARMWAAVAIEGVIKLTPTAKQPLELEVLNAQILKQSDEDFLLSNNDLSLETLRLNAHLRPRTNLFHAIMKVRATLAFAVHEFMNQNEYSWLAAPLFTGNDAEGAGETFSIQKFDNEEFFGKQTHLSVTGQLQAEAYAQAFGNVYTFGPTFRAEKSHTNRHLAEFWMIEPEMAFVDLKGMQDIVENLIKHVIKAVLEKNQQELEFLAQRNDENLIKKLQKVVDSKFERIEYKDAVKILANAVKSGHQFEDNEIFFGMDLGSEHERYMCETYHQGPVFLQNYPKDIKAFYMKLNDDQQTVASTDLLIPGVGELVGGSQREDNYEKLLKRCQELKMPIESLQWYLDLRRFGYYMSSGFGIGFERLVMYVTGVNNIKDTIPFPRSHGQIEF.

It belongs to the class-II aminoacyl-tRNA synthetase family. In terms of assembly, homodimer.

Its subcellular location is the cytoplasm. It catalyses the reaction tRNA(Asn) + L-asparagine + ATP = L-asparaginyl-tRNA(Asn) + AMP + diphosphate + H(+). The chain is Asparagine--tRNA ligase from Ureaplasma urealyticum serovar 10 (strain ATCC 33699 / Western).